The following is a 100-amino-acid chain: DNA-directed RNA polymerase subunit Rpo11 (100 aa).

It belongs to the archaeal Rpo11/eukaryotic RPB11/RPC19 RNA polymerase subunit family. As to quaternary structure, part of the RNA polymerase complex.

The protein localises to the cytoplasm. It carries out the reaction RNA(n) + a ribonucleoside 5'-triphosphate = RNA(n+1) + diphosphate. Functionally, DNA-dependent RNA polymerase (RNAP) catalyzes the transcription of DNA into RNA using the four ribonucleoside triphosphates as substrates. The polypeptide is DNA-directed RNA polymerase subunit Rpo11 (Picrophilus torridus (strain ATCC 700027 / DSM 9790 / JCM 10055 / NBRC 100828 / KAW 2/3)).